A 1131-amino-acid polypeptide reads, in one-letter code: PolyA-specific ribonuclease subunit panl-2 (1131 aa).

A USP domain is found at 489–864 (VTMQSTHGMN…LPALLAYKKK (376 aa)). One can recognise an Exonuclease domain in the interval 909 to 1074 (VGLDAEFIKI…VDARYALKLY (166 aa)). Residues 1104 to 1115 (QTSSPLVVSTTR) are compositionally biased toward polar residues. The segment at 1104 to 1131 (QTSSPLVVSTTRKTPEDTNPADAAPKSV) is disordered.

In Caenorhabditis elegans, this protein is PolyA-specific ribonuclease subunit panl-2.